A 227-amino-acid chain; its full sequence is HTH-type transcriptional regulator ArcR (227 aa).

Position 41-130 (41-130 (VRRYNKGQII…LEYLCKNHDD (90 aa))) interacts with a nucleoside 3',5'-cyclic phosphate. The region spanning 156 to 227 (KLARERIEKV…KNGKNWMVIK (72 aa)) is the HTH crp-type domain. Residues 189–208 (IQLLSDLAGISRETTGHIVH) constitute a DNA-binding region (H-T-H motif).

Its subcellular location is the cytoplasm. Its function is as follows. Positively regulates the expression of the arcABDCR operon under anaerobic conditions, thus playing an essential role in arginine catabolism. May also control the expression of genes encoding proteins which are involved in anaerobic metabolism. Can bind cyclic AMP. The chain is HTH-type transcriptional regulator ArcR (arcR) from Staphylococcus haemolyticus (strain JCSC1435).